Consider the following 228-residue polypeptide: Phosphatidate cytidylyltransferase (228 aa).

Helical transmembrane passes span 31-51 (FVIA…LVGL), 65-85 (INYL…LIFL), 93-113 (LVIM…MIGG), 131-151 (WTGL…VSLI), 165-185 (IYLF…DLFI), and 206-226 (GVLD…CINI).

The protein belongs to the CDS family.

The protein localises to the cell membrane. The catalysed reaction is a 1,2-diacyl-sn-glycero-3-phosphate + CTP + H(+) = a CDP-1,2-diacyl-sn-glycerol + diphosphate. The protein operates within phospholipid metabolism; CDP-diacylglycerol biosynthesis; CDP-diacylglycerol from sn-glycerol 3-phosphate: step 3/3. The polypeptide is Phosphatidate cytidylyltransferase (cdsA) (Rickettsia prowazekii (strain Madrid E)).